A 194-amino-acid polypeptide reads, in one-letter code: MIGRLRGVLTSKTPPWLVVDVCGVGYELEVPMSTFCELPDVGYEVNLFTHYTQKDDSAALYGFLSESERRLFRHLQRVSGIGTKIALAVLSSVSVDTFAGLIQAGDVNALTVIPGIGKKTAERMLVELRDRAADFNNGISTSGKLNLDTVSEAALALQQLGYKPAEAARMARDAGTESDDVATVIKKALQAALC.

Residues 1 to 64 are domain I; that stretch reads MIGRLRGVLT…DDSAALYGFL (64 aa). The interval 65 to 140 is domain II; that stretch reads SESERRLFRH…RAADFNNGIS (76 aa). The segment at 140 to 144 is flexible linker; it reads STSGK. The domain III stretch occupies residues 145 to 194; the sequence is LNLDTVSEAALALQQLGYKPAEAARMARDAGTESDDVATVIKKALQAALC.

It belongs to the RuvA family. Homotetramer. Forms an RuvA(8)-RuvB(12)-Holliday junction (HJ) complex. HJ DNA is sandwiched between 2 RuvA tetramers; dsDNA enters through RuvA and exits via RuvB. An RuvB hexamer assembles on each DNA strand where it exits the tetramer. Each RuvB hexamer is contacted by two RuvA subunits (via domain III) on 2 adjacent RuvB subunits; this complex drives branch migration. In the full resolvosome a probable DNA-RuvA(4)-RuvB(12)-RuvC(2) complex forms which resolves the HJ.

It localises to the cytoplasm. Its function is as follows. The RuvA-RuvB-RuvC complex processes Holliday junction (HJ) DNA during genetic recombination and DNA repair, while the RuvA-RuvB complex plays an important role in the rescue of blocked DNA replication forks via replication fork reversal (RFR). RuvA specifically binds to HJ cruciform DNA, conferring on it an open structure. The RuvB hexamer acts as an ATP-dependent pump, pulling dsDNA into and through the RuvAB complex. HJ branch migration allows RuvC to scan DNA until it finds its consensus sequence, where it cleaves and resolves the cruciform DNA. The protein is Holliday junction branch migration complex subunit RuvA of Xylella fastidiosa (strain M12).